An 86-amino-acid chain; its full sequence is MATKKAGGSSRNGRDSAGRRLGVKKADGQYVIPGNIIVRQRGTKIHPGTNVGLGKDHTIFALIEGRVEFLTKRNHKIVNVKEIASA.

A disordered region spans residues 1–24 (MATKKAGGSSRNGRDSAGRRLGVK).

The protein belongs to the bacterial ribosomal protein bL27 family.

This chain is Large ribosomal subunit protein bL27, found in Rickettsia felis (strain ATCC VR-1525 / URRWXCal2) (Rickettsia azadi).